A 504-amino-acid chain; its full sequence is Aromatic and large neutral amino acid transporter 5-3 (504 aa).

The interval 1–24 (MESTEATMVERKAESPSSGDRARS) is disordered. Residues 8–24 (MVERKAESPSSGDRARS) are compositionally biased toward basic and acidic residues. A run of 6 helical transmembrane segments spans residues 76–96 (YVVL…FMNW), 138–158 (HLFT…GIML), 165–185 (FGAL…GFSS), 206–226 (FFPC…IIAV), 233–253 (ISFI…GATF), and 256–276 (VMLG…LFII). Asn-310 is a glycosylation site (N-linked (GlcNAc...) asparagine). A run of 6 helical transmembrane segments spans residues 324-344 (LSFL…LFFA), 356-376 (EANQ…GGIA), 381-401 (IVPV…LMLI), 406-426 (CFAA…SFLV), 436-456 (IFYP…GGII), and 475-495 (MTVL…FMYV).

This sequence belongs to the SLC43A transporter (TC 2.A.1.44) family.

Its subcellular location is the cell membrane. The enzyme catalyses L-tyrosine(in) = L-tyrosine(out). With respect to regulation, L-tyrosine uptake is stimulated in trans by aromatic and large neutral amino acids, but not smaller or charged amino acids. Functionally, L-tyrosine transporter that is essential for parasite survival and virulence. May also act as an aromatic and large neutral amino acid transporter. Does not cotransport other charged ions. Involved in amino acid homeostasis by facilitating the net uptake of L-tyrosine and maintaining intracellular pools of aromatic and large neutral amino acids through exchange. The chain is Aromatic and large neutral amino acid transporter 5-3 from Toxoplasma gondii.